Consider the following 217-residue polypeptide: N-(5'-phosphoribosyl)anthranilate isomerase (217 aa).

It belongs to the TrpF family.

It carries out the reaction N-(5-phospho-beta-D-ribosyl)anthranilate = 1-(2-carboxyphenylamino)-1-deoxy-D-ribulose 5-phosphate. It participates in amino-acid biosynthesis; L-tryptophan biosynthesis; L-tryptophan from chorismate: step 3/5. This is N-(5'-phosphoribosyl)anthranilate isomerase from Chlorobium phaeobacteroides (strain BS1).